The chain runs to 154 residues: Ascorbate-specific PTS system EIIA component (154 aa).

The 145-residue stretch at 6 to 150 (SLAENKSIRL…QEVLDLIDRT (145 aa)) folds into the PTS EIIA type-2 domain. H68 acts as the Tele-phosphohistidine intermediate in catalysis. Phosphohistidine is present on H68.

The protein resides in the cytoplasm. Its function is as follows. The phosphoenolpyruvate-dependent sugar phosphotransferase system (sugar PTS), a major carbohydrate active transport system, catalyzes the phosphorylation of incoming sugar substrates concomitantly with their translocation across the cell membrane. The enzyme II UlaABC PTS system is involved in ascorbate transport. The polypeptide is Ascorbate-specific PTS system EIIA component (ulaC) (Shigella boydii serotype 4 (strain Sb227)).